The sequence spans 208 residues: Large ribosomal subunit protein uL4 (208 aa).

The disordered stretch occupies residues 45–96 (RQGTHKSKTRAEVRGGGRKPYRQKGTGNARQGSTRSPLMVGGGTIFGPTPHG). The segment covering 69–80 (GTGNARQGSTRS) has biased composition (polar residues).

It belongs to the universal ribosomal protein uL4 family. As to quaternary structure, part of the 50S ribosomal subunit.

One of the primary rRNA binding proteins, this protein initially binds near the 5'-end of the 23S rRNA. It is important during the early stages of 50S assembly. It makes multiple contacts with different domains of the 23S rRNA in the assembled 50S subunit and ribosome. Its function is as follows. Forms part of the polypeptide exit tunnel. This chain is Large ribosomal subunit protein uL4, found in Chlorobium phaeovibrioides (strain DSM 265 / 1930) (Prosthecochloris vibrioformis (strain DSM 265)).